The primary structure comprises 311 residues: Putative S-adenosyl-L-methionine-dependent methyltransferase MMAR_0358 (311 aa).

S-adenosyl-L-methionine is bound by residues Asp132 and 161-162 (DL).

The protein belongs to the UPF0677 family.

Exhibits S-adenosyl-L-methionine-dependent methyltransferase activity. In Mycobacterium marinum (strain ATCC BAA-535 / M), this protein is Putative S-adenosyl-L-methionine-dependent methyltransferase MMAR_0358.